The following is a 195-amino-acid chain: Imidazoleglycerol-phosphate dehydratase (195 aa).

Belongs to the imidazoleglycerol-phosphate dehydratase family.

The protein resides in the cytoplasm. The enzyme catalyses D-erythro-1-(imidazol-4-yl)glycerol 3-phosphate = 3-(imidazol-4-yl)-2-oxopropyl phosphate + H2O. Its pathway is amino-acid biosynthesis; L-histidine biosynthesis; L-histidine from 5-phospho-alpha-D-ribose 1-diphosphate: step 6/9. The polypeptide is Imidazoleglycerol-phosphate dehydratase (Methylorubrum populi (strain ATCC BAA-705 / NCIMB 13946 / BJ001) (Methylobacterium populi)).